A 500-amino-acid chain; its full sequence is Probable cytosol aminopeptidase (500 aa).

Mn(2+) contacts are provided by Lys-265 and Asp-270. Lys-277 is a catalytic residue. Residues Asp-288, Asp-347, and Glu-349 each coordinate Mn(2+). Arg-351 is a catalytic residue.

It belongs to the peptidase M17 family. Mn(2+) is required as a cofactor.

It is found in the cytoplasm. It carries out the reaction Release of an N-terminal amino acid, Xaa-|-Yaa-, in which Xaa is preferably Leu, but may be other amino acids including Pro although not Arg or Lys, and Yaa may be Pro. Amino acid amides and methyl esters are also readily hydrolyzed, but rates on arylamides are exceedingly low.. It catalyses the reaction Release of an N-terminal amino acid, preferentially leucine, but not glutamic or aspartic acids.. Functionally, presumably involved in the processing and regular turnover of intracellular proteins. Catalyzes the removal of unsubstituted N-terminal amino acids from various peptides. This chain is Probable cytosol aminopeptidase, found in Rickettsia peacockii (strain Rustic).